The sequence spans 48 residues: Small, acid-soluble spore protein O (48 aa).

Residues 1-23 form a disordered region; it reads MVKRKANHVINGMNDAKSQGKGA.

Belongs to the SspO family.

It localises to the spore core. The chain is Small, acid-soluble spore protein O from Bacillus velezensis (strain DSM 23117 / BGSC 10A6 / LMG 26770 / FZB42) (Bacillus amyloliquefaciens subsp. plantarum).